Consider the following 298-residue polypeptide: GTPase Era (298 aa).

One can recognise an Era-type G domain in the interval 8–176; the sequence is HCGSVAVIGR…VRDVLALLPE (169 aa). Residues 16–23 form a G1 region; that stretch reads GRPNVGKS. 16 to 23 contacts GTP; sequence GRPNVGKS. Residues 42–46 form a G2 region; that stretch reads QTTRH. Positions 63-66 are G3; sequence DTPG. GTP-binding positions include 63-67 and 125-128; these read DTPGL and NKID. The tract at residues 125–128 is G4; that stretch reads NKID. The segment at 155–157 is G5; the sequence is ISA. One can recognise a KH type-2 domain in the interval 199-283; that stretch reads VREQLMRQLG…FLETWVRVRE (85 aa).

This sequence belongs to the TRAFAC class TrmE-Era-EngA-EngB-Septin-like GTPase superfamily. Era GTPase family. In terms of assembly, monomer.

It is found in the cytoplasm. Its subcellular location is the cell inner membrane. In terms of biological role, an essential GTPase that binds both GDP and GTP, with rapid nucleotide exchange. Plays a role in 16S rRNA processing and 30S ribosomal subunit biogenesis and possibly also in cell cycle regulation and energy metabolism. The sequence is that of GTPase Era from Stenotrophomonas maltophilia (strain R551-3).